The sequence spans 101 residues: Small ribosomal subunit protein uS14 (101 aa).

The segment covering 1 to 11 (MAKKSAIETNE) has biased composition (basic and acidic residues). The disordered stretch occupies residues 1–24 (MAKKSAIETNERRRKLSQSKAAKR). The span at 12–24 (RRRKLSQSKAAKR) shows a compositional bias: basic residues.

Belongs to the universal ribosomal protein uS14 family. In terms of assembly, part of the 30S ribosomal subunit. Contacts proteins S3 and S10.

Its function is as follows. Binds 16S rRNA, required for the assembly of 30S particles and may also be responsible for determining the conformation of the 16S rRNA at the A site. In Azorhizobium caulinodans (strain ATCC 43989 / DSM 5975 / JCM 20966 / LMG 6465 / NBRC 14845 / NCIMB 13405 / ORS 571), this protein is Small ribosomal subunit protein uS14.